We begin with the raw amino-acid sequence, 383 residues long: Cytochrome b (383 aa).

4 consecutive transmembrane segments (helical) span residues 31-51 (FGSL…FLAM), 75-97 (WLMR…VHIF), 112-132 (LWCS…MGYV), and 178-198 (FFSL…IHLI). The heme b site is built by histidine 81 and histidine 95. Positions 182 and 196 each coordinate heme b. Position 201 (histidine 201) interacts with a ubiquinone. A run of 4 helical transmembrane segments spans residues 224–244 (FYTK…IFIF), 288–308 (IGGV…PFTN), 320–340 (IFKV…WVGQ), and 347–367 (YTEI…IIIP).

It belongs to the cytochrome b family. Fungal cytochrome b-c1 complex contains 10 subunits; 3 respiratory subunits, 2 core proteins and 5 low-molecular weight proteins. Cytochrome b-c1 complex is a homodimer. The cofactor is heme b.

It localises to the mitochondrion inner membrane. Its function is as follows. Component of the ubiquinol-cytochrome c reductase complex (complex III or cytochrome b-c1 complex) that is part of the mitochondrial respiratory chain. The b-c1 complex mediates electron transfer from ubiquinol to cytochrome c. Contributes to the generation of a proton gradient across the mitochondrial membrane that is then used for ATP synthesis. This Phytophthora megasperma (Potato pink rot fungus) protein is Cytochrome b (cob).